Consider the following 428-residue polypeptide: Adenylosuccinate synthetase (428 aa).

Residues 12 to 18 (GDEGKGK) and 40 to 42 (GHT) each bind GTP. Residue D13 is the Proton acceptor of the active site. The Mg(2+) site is built by D13 and G40. Residues 13-16 (DEGK), 38-41 (NAGH), T130, R144, Q225, T240, and R304 contribute to the IMP site. H41 serves as the catalytic Proton donor. 300-306 (VNTGRSR) contributes to the substrate binding site. Residues R306, 332 to 334 (KID), and 414 to 416 (GVG) each bind GTP.

The protein belongs to the adenylosuccinate synthetase family. As to quaternary structure, homodimer. Mg(2+) is required as a cofactor.

It localises to the cytoplasm. It catalyses the reaction IMP + L-aspartate + GTP = N(6)-(1,2-dicarboxyethyl)-AMP + GDP + phosphate + 2 H(+). It participates in purine metabolism; AMP biosynthesis via de novo pathway; AMP from IMP: step 1/2. Plays an important role in the de novo pathway of purine nucleotide biosynthesis. Catalyzes the first committed step in the biosynthesis of AMP from IMP. This is Adenylosuccinate synthetase from Clostridium beijerinckii (strain ATCC 51743 / NCIMB 8052) (Clostridium acetobutylicum).